A 248-amino-acid chain; its full sequence is Cell division protein FtsQ (248 aa).

Residues 1-4 lie on the Cytoplasmic side of the membrane; it reads MGTR. Residues 5 to 25 form a helical membrane-spanning segment; sequence LRALLGVLILLVLGGAGWLFL. At 26–248 the chain is on the periplasmic side; sequence RWEPTLLPIR…RVAARAGNRR (223 aa). The region spanning 32–101 is the POTRA domain; the sequence is LPIRLIQIEG…DTLRVQVREY (70 aa).

It belongs to the FtsQ/DivIB family. FtsQ subfamily. Part of a complex composed of FtsB, FtsL and FtsQ.

The protein localises to the cell inner membrane. Its function is as follows. Essential cell division protein. May link together the upstream cell division proteins, which are predominantly cytoplasmic, with the downstream cell division proteins, which are predominantly periplasmic. May control correct divisome assembly. The polypeptide is Cell division protein FtsQ (Allochromatium vinosum (strain ATCC 17899 / DSM 180 / NBRC 103801 / NCIMB 10441 / D) (Chromatium vinosum)).